Reading from the N-terminus, the 89-residue chain is Small ribosomal subunit protein uS14 (89 aa).

It belongs to the universal ribosomal protein uS14 family. As to quaternary structure, part of the 30S ribosomal subunit. Contacts proteins S3 and S10.

Binds 16S rRNA, required for the assembly of 30S particles and may also be responsible for determining the conformation of the 16S rRNA at the A site. In Chlorobaculum parvum (strain DSM 263 / NCIMB 8327) (Chlorobium vibrioforme subsp. thiosulfatophilum), this protein is Small ribosomal subunit protein uS14.